The sequence spans 130 residues: Histone H2A type 2-B (130 aa).

Residues 1–22 (MSGRGKQGGKARAKAKSRSSRA) form a disordered region. N-acetylserine is present on Ser2. The residue at position 2 (Ser2) is a Phosphoserine; by RPS6KA5. Arg4 carries the citrulline; alternate modification. Arg4 carries the post-translational modification Symmetric dimethylarginine; by PRMT5; alternate. N6-(2-hydroxyisobutyryl)lysine is present on Lys6. A compositionally biased stretch (basic residues) spans 7–19 (QGGKARAKAKSRS). N6-(2-hydroxyisobutyryl)lysine; alternate is present on Lys10. Lys10 and Lys14 each carry N6-(beta-hydroxybutyryl)lysine; alternate. Residue Lys10 is modified to N6-lactoyllysine; alternate. Position 10 is an N6-succinyllysine; alternate (Lys10). Residue Lys14 forms a Glycyl lysine isopeptide (Lys-Gly) (interchain with G-Cter in ubiquitin); alternate linkage. Residue Lys16 forms a Glycyl lysine isopeptide (Lys-Gly) (interchain with G-Cter in ubiquitin) linkage. At Lys37 the chain carries N6-(2-hydroxyisobutyryl)lysine; alternate. Lys37 bears the N6-(beta-hydroxybutyryl)lysine; alternate mark. Position 37 is an N6-crotonyllysine; alternate (Lys37). An N6-(2-hydroxyisobutyryl)lysine mark is found at Lys75 and Lys76. Lys96 is subject to N6-(2-hydroxyisobutyryl)lysine; alternate. At Lys96 the chain carries N6-(beta-hydroxybutyryl)lysine; alternate. The residue at position 96 (Lys96) is an N6-succinyllysine; alternate. Residue Lys96 is modified to N6-glutaryllysine; alternate. Residue Gln105 is modified to N5-methylglutamine. Lys119 carries the N6-(2-hydroxyisobutyryl)lysine; alternate modification. Position 119 is an N6-(beta-hydroxybutyryl)lysine; alternate (Lys119). Residues Lys119 and Lys120 each carry the N6-crotonyllysine; alternate modification. N6-glutaryllysine; alternate is present on residues Lys119 and Lys120. Lys120 participates in a covalent cross-link: Glycyl lysine isopeptide (Lys-Gly) (interchain with G-Cter in ubiquitin); alternate. Position 121 is a phosphothreonine; by DCAF1 (Thr121).

The protein belongs to the histone H2A family. As to quaternary structure, the nucleosome is a histone octamer containing two molecules each of H2A, H2B, H3 and H4 assembled in one H3-H4 heterotetramer and two H2A-H2B heterodimers. The octamer wraps approximately 147 bp of DNA. Deiminated on Arg-4 in granulocytes upon calcium entry. In terms of processing, monoubiquitination of Lys-120 (H2AK119Ub) by RING1, TRIM37 and RNF2/RING2 complex gives a specific tag for epigenetic transcriptional repression and participates in X chromosome inactivation of female mammals. It is involved in the initiation of both imprinted and random X inactivation. Ubiquitinated H2A is enriched in inactive X chromosome chromatin. Ubiquitination of H2A functions downstream of methylation of 'Lys-27' of histone H3 (H3K27me). H2AK119Ub by RNF2/RING2 can also be induced by ultraviolet and may be involved in DNA repair. Monoubiquitination of Lys-120 (H2AK119Ub) by TRIM37 may promote transformation of cells in a number of breast cancers. Following DNA double-strand breaks (DSBs), it is ubiquitinated through 'Lys-63' linkage of ubiquitin moieties by the E2 ligase UBE2N and the E3 ligases RNF8 and RNF168, leading to the recruitment of repair proteins to sites of DNA damage. Ubiquitination at Lys-14 and Lys-16 (H2AK13Ub and H2AK15Ub, respectively) in response to DNA damage is initiated by RNF168 that mediates monoubiquitination at these 2 sites, and 'Lys-63'-linked ubiquitin are then conjugated to monoubiquitin; RNF8 is able to extend 'Lys-63'-linked ubiquitin chains in vitro. Deubiquitinated by USP51 at Lys-14 and Lys-16 (H2AK13Ub and H2AK15Ub, respectively) after damaged DNA is repaired. H2AK119Ub and ionizing radiation-induced 'Lys-63'-linked ubiquitination (H2AK13Ub and H2AK15Ub) are distinct events. Post-translationally, phosphorylation on Ser-2 (H2AS1ph) is enhanced during mitosis. Phosphorylation on Ser-2 by RPS6KA5/MSK1 directly represses transcription. Acetylation of H3 inhibits Ser-2 phosphorylation by RPS6KA5/MSK1. Phosphorylation at Thr-121 (H2AT120ph) by DCAF1 is present in the regulatory region of many tumor suppresor genes and down-regulates their transcription. Symmetric dimethylation on Arg-4 by the PRDM1/PRMT5 complex may play a crucial role in the germ-cell lineage. In terms of processing, glutamine methylation at Gln-105 (H2AQ104me) by FBL is specifically dedicated to polymerase I. It is present at 35S ribosomal DNA locus and impairs binding of the FACT complex. Post-translationally, crotonylation (Kcr) is specifically present in male germ cells and marks testis-specific genes in post-meiotic cells, including X-linked genes that escape sex chromosome inactivation in haploid cells. Crotonylation marks active promoters and enhancers and confers resistance to transcriptional repressors. It is also associated with post-meiotically activated genes on autosomes. Lactylated in macrophages by EP300/P300 by using lactoyl-CoA directly derived from endogenous or exogenous lactate, leading to stimulates gene transcription.

Its subcellular location is the nucleus. The protein localises to the chromosome. Its function is as follows. Core component of nucleosome. Nucleosomes wrap and compact DNA into chromatin, limiting DNA accessibility to the cellular machineries which require DNA as a template. Histones thereby play a central role in transcription regulation, DNA repair, DNA replication and chromosomal stability. DNA accessibility is regulated via a complex set of post-translational modifications of histones, also called histone code, and nucleosome remodeling. The chain is Histone H2A type 2-B from Homo sapiens (Human).